The chain runs to 383 residues: MKNVLPPFIEIYRALIATPSISATEESLDQSNASLITLLAGWFSDLGFNVEVQPVPGTRNKFNMLASTGHGAGGLLLTGHTDTVPFDDGRWTRDPFTLTEHDNKLYGLGTADMKGFFAFILDALRDVDVTKLKKPLYILATADEETSMAGARYFSETTALRPDCAIIGEPTSLQPIRAHKGHISNVVRVLGQSGHSSDPARGVNAIELMHDAIGHIMQLRDSLKTRYHYEAFTVPYPTLNLGHIHGGDASNRICACCELHMDIRPLPGMTLNDLNGLLNDALAPVSERWPGRLTVAELHPPIPGYECPPDHQLVEVVEKLLGTKTDVVNYCTEAPFMQTLCPTLVLGPGSINQAHQPDEYLETRFIKPTRELITQVVHHFCWH.

His-80 contacts Zn(2+). Asp-82 is an active-site residue. Asp-112 is a binding site for Zn(2+). Glu-144 is a catalytic residue. Positions 145, 169, and 355 each coordinate Zn(2+).

Belongs to the peptidase M20A family. ArgE subfamily. As to quaternary structure, homodimer. Zn(2+) is required as a cofactor. Co(2+) serves as cofactor. Requires glutathione as cofactor.

It localises to the cytoplasm. It carries out the reaction N(2)-acetyl-L-ornithine + H2O = L-ornithine + acetate. Its pathway is amino-acid biosynthesis; L-arginine biosynthesis; L-ornithine from N(2)-acetyl-L-ornithine (linear): step 1/1. Functionally, catalyzes the hydrolysis of the amide bond of N(2)-acetylated L-amino acids. Cleaves the acetyl group from N-acetyl-L-ornithine to form L-ornithine, an intermediate in L-arginine biosynthesis pathway, and a branchpoint in the synthesis of polyamines. This is Acetylornithine deacetylase from Salmonella heidelberg (strain SL476).